Consider the following 33-residue polypeptide: Beta-amanitin proprotein (33 aa).

Residues 1–10 constitute a propeptide that is removed on maturation; it reads MSDINATRLP. Positions 11–18 form a cross-link, cyclopeptide (Ile-Pro); that stretch reads IWGIGCDP. A cross-link (2'-cysteinyl-6'-hydroxytryptophan sulfoxide (Trp-Cys)) is located at residues 12 to 16; sequence WGIGC. A propeptide spanning residues 19–33 is cleaved from the precursor; sequence CVGDDVTAVLTRGEA.

It belongs to the MSDIN fungal toxin family. Processed by the macrocyclase-peptidase enzyme POPB to yield a toxic cyclic decapeptide. POPB first removes 10 residues from the N-terminus. Conformational trapping of the remaining peptide forces the enzyme to release this intermediate rather than proceed to macrocyclization. The enzyme rebinds the remaining peptide in a different conformation and catalyzes macrocyclization of the N-terminal 8 residues.

In terms of biological role, toxin belonging to the bicyclic octapeptides amatoxins that acts by binding non-competitively to RNA polymerase II and greatly slowing the elongation of transcripts from target promoters. The sequence is that of Beta-amanitin proprotein from Amanita pallidorosea.